Reading from the N-terminus, the 73-residue chain is Large ribosomal subunit protein uL24 (73 aa).

The segment covering 53–65 has biased composition (basic and acidic residues); sequence NPKGGFIKKEKPM. The segment at 53–73 is disordered; it reads NPKGGFIKKEKPMHISNVKKA.

The protein belongs to the universal ribosomal protein uL24 family. In terms of assembly, part of the 50S ribosomal subunit.

Functionally, one of two assembly initiator proteins, it binds directly to the 5'-end of the 23S rRNA, where it nucleates assembly of the 50S subunit. In terms of biological role, one of the proteins that surrounds the polypeptide exit tunnel on the outside of the subunit. The sequence is that of Large ribosomal subunit protein uL24 from Helicobacter pylori (strain J99 / ATCC 700824) (Campylobacter pylori J99).